A 1481-amino-acid polypeptide reads, in one-letter code: Coiled-coil domain-containing protein 88B (1481 aa).

Coiled-coil stretches lie at residues 200–225 (ELVA…RERD) and 258–491 (SHHL…GSQH). 3 disordered regions span residues 430 to 458 (ELQR…QDEV), 494 to 731 (LEEQ…AIPE), and 1331 to 1481 (PRRE…SLSQ). S441 carries the post-translational modification Phosphoserine. Composition is skewed to polar residues over residues 542–557 (ASYS…SQAP) and 568–590 (QMVS…TVET). S649 carries the phosphoserine modification. Residues 660–695 (TLREPLKDQKALDRELELSKQQKETGRHEQRPKGLE) are compositionally biased toward basic and acidic residues. Positions 731–1308 (EEQALRDEVA…KIMDQYRVLE (578 aa)) form a coiled coil. Phosphoserine occurs at positions 1353 and 1384. The span at 1371-1386 (TGSSSPAPMRRVQSSL) shows a compositional bias: polar residues. Residues 1453 to 1472 (LSEHEADDTREAFQEQKPEK) show a composition bias toward basic and acidic residues.

This sequence belongs to the CCDC88 family. As to quaternary structure, homodimer. Interacts with DOCK8. Interacts (via C-terminus) with intact microtubules. Interacts with dynein-dynactin motor complex. Interacts (via C-terminus) with HSPA5. As to expression, abundantly expressed in immune cells, including both CD4(+) and CD8(+) T-cells and in myeloid cells (at protein level). Expressed in endothelium (at protein level). Expressed specifically in spleen, bone marrow, lymph nodes and thymus. Expressed in liver and heart.

Its subcellular location is the membrane. It localises to the cytoplasm. It is found in the cytoskeleton. The protein resides in the microtubule organizing center. The protein localises to the endoplasmic reticulum. Its subcellular location is the golgi apparatus. Functionally, acts as a positive regulator of T-cell maturation and inflammatory function. Required for several functions of T-cells in both the CD4(+) and the CD8(+) compartments and this includes expression of cell surface markers of activation, proliferation, and cytokine production in response to specific or non-specific stimulation and during the course of infection with the mouse malaria parasite Plasmodium berghei. Enhances NK cell cytotoxicity by positively regulating polarization of microtubule-organizing center (MTOC) to cytotoxic synapse, lytic granule transport along microtubules, and dynein-mediated clustering to MTOC. Interacts with HSPA5 and stabilizes the interaction between HSPA5 and ERN1, leading to suppression of ERN1-induced JNK activation and endoplasmic reticulum stress-induced apoptosis. The chain is Coiled-coil domain-containing protein 88B (Ccdc88b) from Mus musculus (Mouse).